We begin with the raw amino-acid sequence, 321 residues long: Glutathione synthetase (321 aa).

In terms of domain architecture, ATP-grasp spans 125–311; it reads EKLFTGWFPH…IAGQFIAFLE (187 aa). An ATP-binding site is contributed by 151 to 208; the sequence is FIREQKEVVIKPLGAMAGESIFYLTVNDPNIPVVIETMTANGHQLVMAQRFIPEVKSG. The Mg(2+) site is built by Glu-282 and Asn-284.

Belongs to the prokaryotic GSH synthase family. The cofactor is Mg(2+). Mn(2+) serves as cofactor.

It catalyses the reaction gamma-L-glutamyl-L-cysteine + glycine + ATP = glutathione + ADP + phosphate + H(+). It functions in the pathway sulfur metabolism; glutathione biosynthesis; glutathione from L-cysteine and L-glutamate: step 2/2. This is Glutathione synthetase from Coxiella burnetii (strain RSA 493 / Nine Mile phase I).